A 74-amino-acid chain; its full sequence is Translation initiation factor IF-1, chloroplastic (74 aa).

The region spanning 1–72 (MERQNLIEME…TKGRITYRLR (72 aa)) is the S1-like domain.

This sequence belongs to the IF-1 family. As to quaternary structure, component of the 30S ribosomal translation pre-initiation complex which assembles on the 30S ribosome in the order IF-2 and IF-3, IF-1 and N-formylmethionyl-tRNA(fMet); mRNA recruitment can occur at any time during PIC assembly.

Its subcellular location is the plastid. The protein localises to the chloroplast. In terms of biological role, one of the essential components for the initiation of protein synthesis. Stabilizes the binding of IF-2 and IF-3 on the 30S subunit to which N-formylmethionyl-tRNA(fMet) subsequently binds. Helps modulate mRNA selection, yielding the 30S pre-initiation complex (PIC). Upon addition of the 50S ribosomal subunit IF-1, IF-2 and IF-3 are released leaving the mature 70S translation initiation complex. The chain is Translation initiation factor IF-1, chloroplastic from Mesostigma viride (Green alga).